Consider the following 165-residue polypeptide: Protein SprT (165 aa).

One can recognise a SprT-like domain in the interval Glu20–Leu162. Residue His78 coordinates Zn(2+). Glu79 is a catalytic residue. Zn(2+) is bound at residue His82.

This sequence belongs to the SprT family. The cofactor is Zn(2+).

Its subcellular location is the cytoplasm. The polypeptide is Protein SprT (Escherichia coli (strain SMS-3-5 / SECEC)).